The primary structure comprises 249 residues: Serine 3-dehydrogenase (249 aa).

6-30 contributes to the NADP(+) binding site; that stretch reads LITGATSGFGQATARRFVKEGWKVI. A substrate-binding site is contributed by S135. Y148 functions as the Proton acceptor in the catalytic mechanism.

It belongs to the short-chain dehydrogenases/reductases (SDR) family. In terms of assembly, homotetramer.

It catalyses the reaction L-serine + NADP(+) = aminoacetaldehyde + CO2 + NADPH. Catalyzes the oxidation of the hydroxyl group of serine to form 2-aminomalonate semialdehyde which is spontaneously converted into 2-aminoacetaldehyde and CO(2). Also acts on D-serine, L-glycerate, D-glycerate and 2-methyl-DL-serine. Does not act on O-methyl-DL-serine and L-threonine. The chain is Serine 3-dehydrogenase (sdh) from Agrobacterium fabrum (strain C58 / ATCC 33970) (Agrobacterium tumefaciens (strain C58)).